We begin with the raw amino-acid sequence, 192 residues long: Phosphomevalonate kinase (192 aa).

ATP is bound by residues 17 to 23 (KRKSGKD) and arginine 141. Asparagine 170 contributes to the substrate binding site. ATP-binding residues include histidine 171, arginine 176, and glutamine 180.

In terms of assembly, monomer. Heart, liver, skeletal muscle, kidney, and pancreas. Lower level in brain, placenta and lung.

It localises to the cytoplasm. Its subcellular location is the cytosol. The catalysed reaction is (R)-5-phosphomevalonate + ATP = (R)-5-diphosphomevalonate + ADP. The protein operates within isoprenoid biosynthesis; isopentenyl diphosphate biosynthesis via mevalonate pathway; isopentenyl diphosphate from (R)-mevalonate: step 2/3. In terms of biological role, catalyzes the reversible ATP-dependent phosphorylation of mevalonate 5-phosphate to produce mevalonate diphosphate and ADP, a key step in the mevalonic acid mediated biosynthesis of isopentenyl diphosphate and other polyisoprenoid metabolites. The sequence is that of Phosphomevalonate kinase (PMVK) from Homo sapiens (Human).